The primary structure comprises 258 residues: uncharacterized protein (258 aa).

N-linked (GlcNAc...) asparagine; by host glycans are attached at residues N60, N104, and N113. Residues 147–156 (TTRKPGQKTT) show a composition bias toward low complexity. The segment at 147–183 (TTRKPGQKTTLSRLKTTPNKHTQHKRSTRRTSPRDYN) is disordered. The span at 157–166 (LSRLKTTPNK) shows a compositional bias: polar residues. Basic residues predominate over residues 167-177 (HTQHKRSTRRT). N183 carries N-linked (GlcNAc...) asparagine; by host glycosylation. Residues 208-228 (AHSAWILIVIIIIIVVILFFF) traverse the membrane as a helical segment.

Belongs to the RL11 family.

Its subcellular location is the membrane. This is an uncharacterized protein from Human cytomegalovirus (strain AD169) (HHV-5).